The following is a 421-amino-acid chain: Cytochrome c biogenesis protein Ccs1 (421 aa).

The next 3 helical transmembrane spans lie at 12 to 32 (LRFA…GTVI), 71 to 91 (TWWF…CTLL), and 157 to 177 (IAPI…IIGS).

The protein belongs to the Ccs1/CcsB family. In terms of assembly, may interact with CcsA.

The protein resides in the plastid. It localises to the chloroplast thylakoid membrane. In terms of biological role, required during biogenesis of c-type cytochromes (cytochrome c6 and cytochrome f) at the step of heme attachment. This is Cytochrome c biogenesis protein Ccs1 from Thalassiosira pseudonana (Marine diatom).